The primary structure comprises 359 residues: S-adenosylmethionine:tRNA ribosyltransferase-isomerase (359 aa).

This sequence belongs to the QueA family. Monomer.

Its subcellular location is the cytoplasm. It catalyses the reaction 7-aminomethyl-7-carbaguanosine(34) in tRNA + S-adenosyl-L-methionine = epoxyqueuosine(34) in tRNA + adenine + L-methionine + 2 H(+). The protein operates within tRNA modification; tRNA-queuosine biosynthesis. Transfers and isomerizes the ribose moiety from AdoMet to the 7-aminomethyl group of 7-deazaguanine (preQ1-tRNA) to give epoxyqueuosine (oQ-tRNA). This Alcanivorax borkumensis (strain ATCC 700651 / DSM 11573 / NCIMB 13689 / SK2) protein is S-adenosylmethionine:tRNA ribosyltransferase-isomerase.